The chain runs to 301 residues: POU domain, class 6, transcription factor 1 (301 aa).

2 tandem repeats follow at residues 11–17 (NAQGQVI) and 50–56 (NAQGQVI). Residues 11 to 56 (NAQGQVIGALPWVVNSASVATPAPAQSLQVQAVTPQLLLNAQGQVI) are 2 X 7 AA repeats of N-A-Q-G-Q-V-I. Residues 66 to 88 (QPVAVRKPSTPESPAKSEVQPIQ) form a disordered region. In terms of domain architecture, POU-specific spans 139-213 (EDGINLEEIR…VLEKWLNEAE (75 aa)). Positions 234–293 (KRKRRTSFTPQAIEALNAYFEKNPLPTGQEITEIAKELNYDREVVRVWFCNRRQTLKNTS) form a DNA-binding region, homeobox.

It belongs to the POU transcription factor family. Class-6 subfamily. As to expression, in the embryo, widely expressed, with highest levels in the developing brain and spinal cord. In the adult, mostly found in the brain, where it is diffusely expressed with the exception of an enrichment in layer IV of the neocortex. Also found in kidney, lung, heart, adrenal, skin, and placenta. Low levels in spleen, muscle, liver, anterior pituitary, testis and ovary.

The protein localises to the nucleus. Functionally, transcription factor that binds preferentially to a variant of the octamer motif (5'-ATGATAAT-3'). The sequence is that of POU domain, class 6, transcription factor 1 (Pou6f1) from Rattus norvegicus (Rat).